An 828-amino-acid polypeptide reads, in one-letter code: Periplasmic nitrate reductase (828 aa).

A signal peptide (tat-type signal) is located at residues 1-31 (MKLSRRSFMKANAVAAAAAAAGLSVPGVARA). Residues 39–95 (IKWDKAPCRFCGTGCGVLVGTQQGRVVACQGDPDAPVNRGLNCIKGYFLPKIMYGKD) form the 4Fe-4S Mo/W bis-MGD-type domain. Residues Cys-46, Cys-49, Cys-53, and Cys-81 each coordinate [4Fe-4S] cluster. Mo-bis(molybdopterin guanine dinucleotide) contacts are provided by residues Lys-83, Gln-150, Asn-175, Cys-179, 212–219 (WGSNMAEM), 243–247 (STFQH), 262–264 (QSD), Met-372, Gln-376, Asn-482, 508–509 (SD), Lys-531, Asp-558, and 718–727 (TGRVLEHWHT). Phe-794 lines the substrate pocket. Residues Asn-802 and Lys-819 each coordinate Mo-bis(molybdopterin guanine dinucleotide).

Belongs to the prokaryotic molybdopterin-containing oxidoreductase family. NasA/NapA/NarB subfamily. As to quaternary structure, component of the periplasmic nitrate reductase NapAB complex composed of NapA and NapB. [4Fe-4S] cluster serves as cofactor. The cofactor is Mo-bis(molybdopterin guanine dinucleotide). In terms of processing, predicted to be exported by the Tat system. The position of the signal peptide cleavage has not been experimentally proven.

Its subcellular location is the periplasm. It carries out the reaction 2 Fe(II)-[cytochrome] + nitrate + 2 H(+) = 2 Fe(III)-[cytochrome] + nitrite + H2O. In terms of biological role, catalytic subunit of the periplasmic nitrate reductase complex NapAB. Receives electrons from NapB and catalyzes the reduction of nitrate to nitrite. This Salmonella paratyphi C (strain RKS4594) protein is Periplasmic nitrate reductase.